The chain runs to 322 residues: MFKSTLNIAVAIVCSSLVTLTGCEPKVAQSQVIQPLETPIVIEHNLGQTVISNRPQRVAALDMNEVDFLDQLNVPIAGMVKDFVPHFLEKYKNTPDISDLGAIVQPNMEKIYALKPDLVLMTPLHANQYEELSKLAPTVHFDIDFRNSHGHHVDIIKQHVIDLGEIFNKQTLAQKKVAEIDAKVDEVQALTAERSEKALVVMHNNGSFSSFGIESRYGFVFDVLGVKPASTEIAASLHGQPISSEFINQANPDILYIIDRTAVMEGKPVIDAEHLANPLLRQTKAWKNGKVIFVDADAWYITSASITSLKIVIDDIIKGYQS.

Residues 1 to 22 (MFKSTLNIAVAIVCSSLVTLTG) form the signal peptide. A lipid anchor (N-palmitoyl cysteine) is attached at Cys23. Cys23 is lipidated: S-diacylglycerol cysteine. The 266-residue stretch at 57-322 (RVAALDMNEV…IDDIIKGYQS (266 aa)) folds into the Fe/B12 periplasmic-binding domain.

It belongs to the bacterial solute-binding protein 8 family. Part of an iron transport system composed of the outer membrane receptor FatA, the periplasmic binding protein FatB and the inner membrane proteins FatC and FatD.

Its subcellular location is the cell inner membrane. Functionally, involved in the uptake of iron in complex with the siderophore anguibactin. Binds ferric-anguibactin in the periplasm and mediates its transport into the cytoplasm. This chain is Ferric-anguibactin-binding protein FatB, found in Vibrio anguillarum (strain ATCC 68554 / 775) (Listonella anguillarum).